Consider the following 188-residue polypeptide: GTPase KRas (188 aa).

GTP contacts are provided by residues 10–18 (GAGGVGKSA), 29–35 (VDEYDPT), 59–60 (AG), and 116–119 (NKCD). Positions 32 to 40 (YDPTIEDSY) match the Effector region motif. Positions 167 to 188 (KEKMSKEGKKKKKKSKTKCVLM) are disordered. Residue Cys185 is modified to Cysteine methyl ester. Cys185 is lipidated: S-farnesyl cysteine. The propeptide at 186-188 (VLM) is removed in mature form.

This sequence belongs to the small GTPase superfamily. Ras family.

The protein resides in the cell membrane. It localises to the cytoplasm. The enzyme catalyses GTP + H2O = GDP + phosphate + H(+). Alternates between an inactive form bound to GDP and an active form bound to GTP. Activated by a guanine nucleotide-exchange factor (GEF) and inactivated by a GTPase-activating protein (GAP). Ras proteins bind GDP/GTP and possess intrinsic GTPase activity. Plays an important role in the regulation of cell proliferation. May play a role in promoting oncogenic events by inducing transcriptional silencing of tumor suppressor genes (TSGs). The sequence is that of GTPase KRas (kras) from Cyprinus carpio (Common carp).